A 488-amino-acid chain; its full sequence is 3-octaprenyl-4-hydroxybenzoate carboxy-lyase (488 aa).

Asparagine 172 lines the Mn(2+) pocket. Residues 175 to 177, 189 to 191, and 194 to 195 contribute to the prenylated FMN site; these read IYR, RWL, and RG. A Mn(2+)-binding site is contributed by glutamate 238. The Proton donor role is filled by aspartate 287.

Belongs to the UbiD family. Homohexamer. Prenylated FMN serves as cofactor. It depends on Mn(2+) as a cofactor.

The protein resides in the cell membrane. It carries out the reaction a 4-hydroxy-3-(all-trans-polyprenyl)benzoate + H(+) = a 2-(all-trans-polyprenyl)phenol + CO2. It functions in the pathway cofactor biosynthesis; ubiquinone biosynthesis. Its function is as follows. Catalyzes the decarboxylation of 3-octaprenyl-4-hydroxy benzoate to 2-octaprenylphenol, an intermediate step in ubiquinone biosynthesis. The chain is 3-octaprenyl-4-hydroxybenzoate carboxy-lyase from Alkalilimnicola ehrlichii (strain ATCC BAA-1101 / DSM 17681 / MLHE-1).